Here is a 433-residue protein sequence, read N- to C-terminus: Cyclin-dependent kinase 15 (433 aa).

The segment at 46-83 (ASSSTASFHPRGLEAASAQKLKSKRPRSNSDSFQEENL) is disordered. Residues 52 to 336 (SFHPRGLEAA…SKLPNYNPEW (285 aa)) enclose the Protein kinase domain. Residues 58–66 (LEAASAQKL) and glutamate 81 contribute to the ATP site. Threonine 173 functions as the Proton acceptor in the catalytic mechanism.

This sequence belongs to the protein kinase superfamily. CMGC Ser/Thr protein kinase family. CDC2/CDKX subfamily. The cofactor is Mg(2+).

It carries out the reaction L-seryl-[protein] + ATP = O-phospho-L-seryl-[protein] + ADP + H(+). It catalyses the reaction L-threonyl-[protein] + ATP = O-phospho-L-threonyl-[protein] + ADP + H(+). Serine/threonine-protein kinase that acts like an antiapoptotic protein that counters TRAIL/TNFSF10-induced apoptosis by inducing phosphorylation of BIRC5 at 'Thr-34'. This Mus musculus (Mouse) protein is Cyclin-dependent kinase 15 (Cdk15).